A 417-amino-acid polypeptide reads, in one-letter code: Phosphoglycerate kinase 1 (417 aa).

14 residues coordinate (2R)-3-phosphoglycerate: V23, D24, F25, N26, N38, R39, S62, H63, G65, R66, L121, R122, H168, and R169. Residue G212 coordinates ADP. G212 is a CDP binding site. 2 residues coordinate AMP: A213 and K214. Residue A213 coordinates ATP. A213 lines the Mg(2+) pocket. D217 contributes to the CDP binding site. D217 provides a ligand contact to Mg(2+). Residue K218 coordinates AMP. K218 contacts ATP. G236 provides a ligand contact to ADP. G236 provides a ligand contact to CDP. AMP contacts are provided by G237 and G311. ATP contacts are provided by G237 and G311. Residues G336 and F341 each contribute to the CDP site. F341 contributes to the ADP binding site. E342 contacts AMP. ATP is bound by residues E342, D374, and T375. D374 serves as a coordination point for Mg(2+).

It belongs to the phosphoglycerate kinase family. Monomer. Mg(2+) is required as a cofactor.

The protein resides in the cytoplasm. It is found in the mitochondrion. The catalysed reaction is (2R)-3-phosphoglycerate + ATP = (2R)-3-phospho-glyceroyl phosphate + ADP. It functions in the pathway carbohydrate degradation; glycolysis; pyruvate from D-glyceraldehyde 3-phosphate: step 2/5. Catalyzes one of the two ATP producing reactions in the glycolytic pathway via the reversible conversion of 1,3-diphosphoglycerate to 3-phosphoglycerate. Both L- and D- forms of purine and pyrimidine nucleotides can be used as substrates, but the activity is much lower on pyrimidines. Negatively regulates the biosynthesis of acetyl-CoA from pyruvate in the mitochondrion. The sequence is that of Phosphoglycerate kinase 1 (PGK1) from Rhizopus niveus.